Reading from the N-terminus, the 389-residue chain is COP9 signalosome complex subunit 11 (389 aa).

The PCI domain maps to 143–312; the sequence is QLIIDIPNLV…ILYQKFDPQM (170 aa).

In terms of assembly, component of a COP9 signalosome-like (CSN) complex.

It localises to the cytoplasm. Its subcellular location is the nucleus. Its function is as follows. Component of the COP9 signalosome (CSN) complex that acts as an regulator of the ubiquitin (Ubl) conjugation pathway by mediating the deneddylation of the cullin subunit of SCF-type E3 ubiquitin-protein ligase complexes The CSN complex is involved in the regulation of the mating pheromone response. PCI8 may also be involved in transcriptional and translational control. This is COP9 signalosome complex subunit 11 (PCI8) from Kluyveromyces lactis (strain ATCC 8585 / CBS 2359 / DSM 70799 / NBRC 1267 / NRRL Y-1140 / WM37) (Yeast).